Here is a 191-residue protein sequence, read N- to C-terminus: Rubrerythrin (191 aa).

In terms of domain architecture, Ferritin-like diiron spans 1-146 (MKSLKGSRTE…DFARNIKEGR (146 aa)). E20, E53, E94, E97, E128, H131, C158, C161, C174, and C177 together coordinate Fe(3+). The 39-residue stretch at 153–191 (ATKWRCRNCGYVHEGTGAPELCPACAHPKAHFELLGINW) folds into the Rubredoxin-like domain.

As to quaternary structure, homodimer. Possesses two rubredoxin-like centers and two non-sulfur oxo-bridged di-iron centers per dimer. Requires Fe(3+) as cofactor.

The protein resides in the cytoplasm. In terms of biological role, may provide oxidative stress protection via catalytic reduction of intracellular hydrogen peroxide. The polypeptide is Rubrerythrin (rbr) (Nitratidesulfovibrio vulgaris (strain ATCC 29579 / DSM 644 / CCUG 34227 / NCIMB 8303 / VKM B-1760 / Hildenborough) (Desulfovibrio vulgaris)).